Here is an 86-residue protein sequence, read N- to C-terminus: uncharacterized protein (86 aa).

Helical transmembrane passes span 20 to 38 and 47 to 63; these read IQFWGFVAATGVLLYSVYL and FSTFLFACVGTAATKGV. The tract at residues 67 to 86 is disordered; the sequence is LSQRREQGKEQGREQGREQE. The span at 69 to 86 shows a compositional bias: basic and acidic residues; that stretch reads QRREQGKEQGREQGREQE.

It is found in the cell membrane. This is an uncharacterized protein from Haemophilus influenzae (strain ATCC 51907 / DSM 11121 / KW20 / Rd).